A 255-amino-acid chain; its full sequence is Methionine aminopeptidase (255 aa).

Histidine 76 is a substrate binding site. A divalent metal cation is bound by residues aspartate 93, aspartate 104, and histidine 167. Substrate is bound at residue histidine 174. The a divalent metal cation site is built by glutamate 201 and glutamate 232.

Belongs to the peptidase M24A family. Methionine aminopeptidase type 1 subfamily. As to quaternary structure, monomer. Requires Co(2+) as cofactor. The cofactor is Zn(2+). It depends on Mn(2+) as a cofactor. Fe(2+) is required as a cofactor.

The catalysed reaction is Release of N-terminal amino acids, preferentially methionine, from peptides and arylamides.. Functionally, removes the N-terminal methionine from nascent proteins. The N-terminal methionine is often cleaved when the second residue in the primary sequence is small and uncharged (Met-Ala-, Cys, Gly, Pro, Ser, Thr, or Val). Requires deformylation of the N(alpha)-formylated initiator methionine before it can be hydrolyzed. This chain is Methionine aminopeptidase, found in Treponema pallidum (strain Nichols).